Consider the following 245-residue polypeptide: rRNA adenine N-6-methyltransferase (245 aa).

S-adenosyl-L-methionine is bound by residues Asn-10, Leu-12, Gly-37, Glu-58, Asp-83, and Ser-100.

The protein belongs to the class I-like SAM-binding methyltransferase superfamily. rRNA adenine N(6)-methyltransferase family.

It carries out the reaction adenosine(2085) in 23S rRNA + 2 S-adenosyl-L-methionine = N(6)-dimethyladenosine(2085) in 23S rRNA + 2 S-adenosyl-L-homocysteine + 2 H(+). This protein produces a dimethylation of the adenine residue at position 2085 in 23S rRNA, resulting in reduced affinity between ribosomes and macrolide-lincosamide-streptogramin B antibiotics. The sequence is that of rRNA adenine N-6-methyltransferase from Streptococcus sanguinis.